The chain runs to 270 residues: Glutamate racemase (270 aa).

Substrate is bound by residues 7-8 (DS) and 39-40 (YG). Cys70 functions as the Proton donor/acceptor in the catalytic mechanism. 71-72 (NT) contributes to the substrate binding site. Cys194 serves as the catalytic Proton donor/acceptor. A substrate-binding site is contributed by 195-196 (TH).

The protein belongs to the aspartate/glutamate racemases family.

It catalyses the reaction L-glutamate = D-glutamate. The protein operates within cell wall biogenesis; peptidoglycan biosynthesis. Its function is as follows. Provides the (R)-glutamate required for cell wall biosynthesis. This is Glutamate racemase from Cereibacter sphaeroides (strain ATCC 17025 / ATH 2.4.3) (Rhodobacter sphaeroides).